The primary structure comprises 339 residues: Probable cytosolic iron-sulfur protein assembly protein CIAO1 (339 aa).

7 WD repeats span residues histidine 14–lysine 53, glycine 59–valine 98, glycine 103–cysteine 142, serine 148–cysteine 187, glycine 192–glycine 231, phenylalanine 250–glutamine 289, and alanine 301–leucine 339. The short motif at leucine 176–glutamine 178 is the LYR motif; required for interaction with HSC20 element.

Belongs to the WD repeat CIA1 family. As to quaternary structure, component of the CIA complex. Interacts with CIAO2A and forms a complex with CIAO2B and MMS19; the interactions with CIAO2A and CIAO2B are mutually exclusive. Interacts with CHD1L, ERCC2, IREB2 and POLD1. Component of the MMXD complex, which includes CIAO1, ERCC2, CIAO2B, MMS19 and SLC25A5. Interacts with WT1. Interacts with CIAO3. Interacts (via LYR motif) with HSC20.

The protein localises to the cytoplasm. Key component of the cytosolic iron-sulfur protein assembly (CIA) complex, a multiprotein complex that mediates the incorporation of iron-sulfur cluster into extramitochondrial Fe/S proteins. As a CIA complex component, interacts specifically with CIAO2A or CIAO2B and MMS19 to assist different branches of iron-sulfur protein assembly, depending of its interactors. The complex CIAO1:CIAO2B:MMS19 binds to and facilitates the assembly of most cytosolic-nuclear Fe/S proteins. CIAO1:CIAO2A specifically matures ACO1 and stabilizes IREB2. Seems to specifically modulate the transactivation activity of WT1. As part of the mitotic spindle-associated MMXD complex it may play a role in chromosome segregation. This chain is Probable cytosolic iron-sulfur protein assembly protein CIAO1, found in Rattus norvegicus (Rat).